The chain runs to 180 residues: Mitochondrial membrane protein FMP33 (180 aa).

3 helical membrane-spanning segments follow: residues 34 to 54 (LYTS…LYLE), 121 to 141 (FSIV…STLG), and 145 to 165 (ILYK…YMAL).

The protein resides in the mitochondrion membrane. This is Mitochondrial membrane protein FMP33 (FMP33) from Saccharomyces cerevisiae (strain ATCC 204508 / S288c) (Baker's yeast).